We begin with the raw amino-acid sequence, 313 residues long: Ribonuclease HIII (313 aa).

Residues 98–313 (YNCIGSDEAG…REKALKLIKK (216 aa)) enclose the RNase H type-2 domain. A divalent metal cation is bound by residues D104, E105, and D208.

The protein belongs to the RNase HII family. RnhC subfamily. Requires Mn(2+) as cofactor. It depends on Mg(2+) as a cofactor.

It is found in the cytoplasm. It catalyses the reaction Endonucleolytic cleavage to 5'-phosphomonoester.. Functionally, endonuclease that specifically degrades the RNA of RNA-DNA hybrids. The chain is Ribonuclease HIII from Macrococcus caseolyticus (strain JCSC5402) (Macrococcoides caseolyticum).